The sequence spans 616 residues: Membrane protein insertase YidC (616 aa).

A helical membrane pass occupies residues 8 to 28 (MFVAIALSLVVLLGWHYFVTG). The segment at 33–85 (RQRQAAQSQTAQTGAPQTADGIPSPSPREGGPNAPAPGTLPGAAAQGPVSRED) is disordered. Low complexity-rich tracts occupy residues 36–51 (QAAQSQTAQTGAPQTA) and 62–80 (GGPNAPAPGTLPGAAAQGP). 4 helical membrane passes run 386 to 406 (LLGNFGVSILLVTLILKLFFL), 460 to 480 (WPVLIQIPVFFALYKVLFITI), 516 to 536 (YIPIHLGVWPIIMGITMFIQM), and 551 to 571 (FAFMPIVFTFMLGSFPAGLVI).

Belongs to the OXA1/ALB3/YidC family. Type 1 subfamily. In terms of assembly, interacts with the Sec translocase complex via SecD. Specifically interacts with transmembrane segments of nascent integral membrane proteins during membrane integration.

It localises to the cell inner membrane. Functionally, required for the insertion and/or proper folding and/or complex formation of integral membrane proteins into the membrane. Involved in integration of membrane proteins that insert both dependently and independently of the Sec translocase complex, as well as at least some lipoproteins. Aids folding of multispanning membrane proteins. This chain is Membrane protein insertase YidC, found in Methylorubrum extorquens (strain PA1) (Methylobacterium extorquens).